A 302-amino-acid polypeptide reads, in one-letter code: Phytoene synthase (302 aa).

It belongs to the phytoene/squalene synthase family. It depends on ATP as a cofactor. Mn(2+) is required as a cofactor. Requires Mg(2+) as cofactor.

It functions in the pathway carotenoid biosynthesis; phytoene biosynthesis. Functionally, involved in the biosynthesis of carotenoids. Catalyzes the condensation of two molecules of geranylgeranyl diphosphate (GGPP) to give prephytoene diphosphate (PPPP) and the subsequent rearrangement of the cyclopropylcarbinyl intermediate to yield phytoene. This chain is Phytoene synthase (crtB), found in Mycobacterium bovis (strain ATCC BAA-935 / AF2122/97).